The sequence spans 276 residues: Methylesterase 17 (276 aa).

The region spanning 19–138 (PHFVLIHGMS…TDEDMKDGVP (120 aa)) is the AB hydrolase-1 domain. S95 serves as the catalytic Acyl-ester intermediate. Catalysis depends on charge relay system residues D225 and H252.

It belongs to the AB hydrolase superfamily. Methylesterase family. As to expression, expressed in several tissues of seedlings and adult plants, with a higher relative level of expression in the seedling shoot apex and the adult stem.

It carries out the reaction methyl (indol-3-yl)acetate + H2O = (indol-3-yl)acetate + methanol + H(+). It participates in plant hormone biosynthesis. Methylesterase that efficiently and specifically hydrolyzes methyl indole-3-acetic acid (MeIAA) to IAA (auxin). MeIAA is believed to be an inactive form of auxin that needs to be demethylated to exert a biological effect. The protein is Methylesterase 17 of Arabidopsis thaliana (Mouse-ear cress).